Reading from the N-terminus, the 131-residue chain is Large ribosomal subunit protein bL17 (131 aa).

Belongs to the bacterial ribosomal protein bL17 family. As to quaternary structure, part of the 50S ribosomal subunit. Contacts protein L32.

The chain is Large ribosomal subunit protein bL17 from Bordetella petrii (strain ATCC BAA-461 / DSM 12804 / CCUG 43448).